The sequence spans 436 residues: 3-ketoacyl-CoA thiolase (436 aa).

Cysteine 99 functions as the Acyl-thioester intermediate in the catalytic mechanism. Catalysis depends on proton acceptor residues histidine 392 and cysteine 422.

It belongs to the thiolase-like superfamily. Thiolase family. As to quaternary structure, heterotetramer of two alpha chains (FadJ) and two beta chains (FadI).

It is found in the cytoplasm. It catalyses the reaction an acyl-CoA + acetyl-CoA = a 3-oxoacyl-CoA + CoA. It functions in the pathway lipid metabolism; fatty acid beta-oxidation. In terms of biological role, catalyzes the final step of fatty acid oxidation in which acetyl-CoA is released and the CoA ester of a fatty acid two carbons shorter is formed. The polypeptide is 3-ketoacyl-CoA thiolase (Serratia proteamaculans (strain 568)).